A 368-amino-acid chain; its full sequence is 3-isopropylmalate dehydrogenase (368 aa).

80–93 (GPKWDNLEFSKKPE) serves as a coordination point for NAD(+). Residues Arg-100, Arg-110, Arg-138, and Asp-229 each coordinate substrate. Mg(2+) contacts are provided by Asp-229, Asp-253, and Asp-257. 292–304 (GSAPDIAGKEIAN) contacts NAD(+).

Belongs to the isocitrate and isopropylmalate dehydrogenases family. LeuB type 1 subfamily. Homodimer. Mg(2+) serves as cofactor. The cofactor is Mn(2+).

It localises to the cytoplasm. It catalyses the reaction (2R,3S)-3-isopropylmalate + NAD(+) = 4-methyl-2-oxopentanoate + CO2 + NADH. Its pathway is amino-acid biosynthesis; L-leucine biosynthesis; L-leucine from 3-methyl-2-oxobutanoate: step 3/4. In terms of biological role, catalyzes the oxidation of 3-carboxy-2-hydroxy-4-methylpentanoate (3-isopropylmalate) to 3-carboxy-4-methyl-2-oxopentanoate. The product decarboxylates to 4-methyl-2 oxopentanoate. The sequence is that of 3-isopropylmalate dehydrogenase from Pelagibacter ubique (strain HTCC1062).